We begin with the raw amino-acid sequence, 298 residues long: Probable tRNA(His) guanylyltransferase (298 aa).

Residues Asp-58, Gly-59, and Asp-105 each contribute to the Mg(2+) site. Residues 58-63 and 104-105 contribute to the GTP site; these read DGRNFH and SD.

This sequence belongs to the tRNA(His) guanylyltransferase family. As to quaternary structure, homotetramer. Interacts with MFN1 and MFN2; functions as a guanyl-nucleotide exchange factor/GEF for MFN2 and also probably MFN1. The cofactor is Mg(2+).

The protein localises to the cytoplasm. The protein resides in the mitochondrion. The catalysed reaction is a 5'-end ribonucleotide-tRNA(His) + GTP + ATP + H2O = a 5'-end phospho-guanosine-ribonucleotide-tRNA(His) + AMP + 2 diphosphate + H(+). Adds a GMP to the 5'-end of tRNA(His) after transcription and RNase P cleavage. This step is essential for proper recognition of the tRNA and for the fidelity of protein synthesis. Also functions as a guanyl-nucleotide exchange factor/GEF for the MFN1 and MFN2 mitofusins thereby regulating mitochondrial fusion. By regulating both mitochondrial dynamics and bioenergetic function, it contributes to cell survival following oxidative stress. The chain is Probable tRNA(His) guanylyltransferase (THG1L) from Bos taurus (Bovine).